The following is a 101-amino-acid chain: Interleukin-8 (101 aa).

The signal sequence occupies residues 1-22 (MTSKLAVALLAAFLLSAALCEG). R27 is modified (citrulline). 2 cysteine pairs are disulfide-bonded: C34–C61 and C36–C77.

Belongs to the intercrine alpha (chemokine CxC) family. In terms of assembly, homodimer. Interacts with TNFAIP6 (via Link domain); this interaction interferes with chemokine binding to glycosaminoglycans. Citrullination at Arg-27 prevents proteolysis, and dampens tissue inflammation, it also enhances leukocytosis, possibly through impaired chemokine clearance from the blood circulation.

It localises to the secreted. Chemotactic factor that mediates inflammatory response by attracting neutrophils, basophils, and T-cells to clear pathogens and protect the host from infection. Also plays an important role in neutrophil activation. Released in response to an inflammatory stimulus, exerts its effect by binding to the G-protein-coupled receptors CXCR1 and CXCR2, primarily found in neutrophils, monocytes and endothelial cells. G-protein heterotrimer (alpha, beta, gamma subunits) constitutively binds to CXCR1/CXCR2 receptor and activation by IL8 leads to beta and gamma subunits release from Galpha (GNAI2 in neutrophils) and activation of several downstream signaling pathways including PI3K and MAPK pathways. The polypeptide is Interleukin-8 (CXCL8) (Macaca mulatta (Rhesus macaque)).